A 179-amino-acid chain; its full sequence is Cytoglobin-2 (179 aa).

The region spanning 18–167 (PLSDAEMEII…VYWHVTGAYT (150 aa)) is the Globin domain. Heme b contacts are provided by His-81 and His-113.

This sequence belongs to the globin family. As to quaternary structure, monomeric.

The protein localises to the cytoplasm. The protein resides in the nucleus. The enzyme catalyses Fe(II)-heme b-[protein] + nitric oxide + O2 = Fe(III)-heme b-[protein] + nitrate. It catalyses the reaction Fe(III)-heme b-[protein] + nitric oxide + H2O = Fe(II)-heme b-[protein] + nitrite + 2 H(+). The catalysed reaction is 2 superoxide + 2 H(+) = H2O2 + O2. It carries out the reaction H2O2 + AH2 = A + 2 H2O. Probable multifunctional globin with a hexacoordinated heme iron required for the catalysis of various reactions depending on redox condition of the cell as well as oxygen availability. Has a nitric oxide dioxygenase (NOD) activity and is most probably involved in cell-mediated and oxygen-dependent nitric oxide consumption. Under normoxic conditions functions as a nitric oxide dioxygenase (NOD) but under hypoxic conditions the globin may switch its function to that of a nitrite (NO2) reductase (NiR), generating nitric oxide. Could also have peroxidase and superoxide dismutase activities, detoxifying reactive oxygen species and protecting cells against oxidative stress. Also binds dioxygen with low affinity and could function as an oxygen sensor but has probably no function as a respiratory oxygen carrier. In Oryzias latipes (Japanese rice fish), this protein is Cytoglobin-2.